The chain runs to 286 residues: 3-hydroxyanthranilate 3,4-dioxygenase (286 aa).

A domain A (catalytic) region spans residues Met1 to Asn160. Arg43 contributes to the O2 binding site. His47, Glu53, and His91 together coordinate Fe cation. Position 53 (Glu53) interacts with substrate. Substrate contacts are provided by Arg95 and Glu105. Residues Pro161 to Val177 form a linker region. The tract at residues Met178–Gly286 is domain B.

The protein belongs to the 3-HAO family. Monomer. Fe(2+) is required as a cofactor.

It is found in the cytoplasm. The protein localises to the cytosol. It carries out the reaction 3-hydroxyanthranilate + O2 = (2Z,4Z)-2-amino-3-carboxymuconate 6-semialdehyde. It participates in cofactor biosynthesis; NAD(+) biosynthesis; quinolinate from L-kynurenine: step 3/3. Catalyzes the oxidative ring opening of 3-hydroxyanthranilate to 2-amino-3-carboxymuconate semialdehyde, which spontaneously cyclizes to quinolinate. This is 3-hydroxyanthranilate 3,4-dioxygenase from Bos taurus (Bovine).